The sequence spans 503 residues: Cysteine--tRNA ligase (503 aa).

Cysteine 31 lines the Zn(2+) pocket. Residues 33–43 (PTVYDYAHIGN) carry the 'HIGH' region motif. Residues cysteine 225, histidine 264, and glutamate 268 each coordinate Zn(2+). Residues 297–301 (KMSKS) carry the 'KMSKS' region motif. Lysine 300 contributes to the ATP binding site.

The protein belongs to the class-I aminoacyl-tRNA synthetase family. As to quaternary structure, monomer. Zn(2+) is required as a cofactor.

The protein localises to the cytoplasm. It catalyses the reaction tRNA(Cys) + L-cysteine + ATP = L-cysteinyl-tRNA(Cys) + AMP + diphosphate. In Bartonella tribocorum (strain CIP 105476 / IBS 506), this protein is Cysteine--tRNA ligase.